Reading from the N-terminus, the 398-residue chain is MKPLFVLLLLLLLLDLAQAQGVLHRVPLRRHQSLRKKLRAQGQLSDFWRSHNLDMIEFSESCNVDKGINEPLINYLDMEYFGTVSIGSPSQNFTVIFDTGSSNLWVPSVYCTSPACKAHPVFHPSQSSTYMEVGNHFSIQYGTGSLTGIIGADQVSVEGLTVEGQQFGESVKEPGQTFVNAEFDGILGLGYPSLAVGGVTPVFDNMMAQNLVALPMFSVYLSSDPQGGSGSELTFGGYDPSHFSGSLNWIPVTKQGYWQIALDGIQVGDTVMFCSEGCQAIVDTGTSLITGPPKKIKQLQEAIGATPMDGEYAVDCATLNMMPNVTFLINGVSYTLSPTAYILPDLVDGMQFCGSGFQGLDIQPPAGPLWILGDVFIRKFYSVFDRGNNQVGLAPAVP.

A signal peptide spans 1–21 (MKPLFVLLLLLLLLDLAQAQG). A propeptide spans 22–58 (VLHRVPLRRHQSLRKKLRAQGQLSDFWRSHNLDMIEF) (activation peptide). The Peptidase A1 domain maps to 80–394 (YFGTVSIGSP…DRGNNQVGLA (315 aa)). Residue Asn-92 is glycosylated (N-linked (GlcNAc...) asparagine). The active site involves Asp-98. 2 disulfide bridges follow: Cys-111–Cys-116 and Cys-274–Cys-278. Asp-283 is a catalytic residue.

It belongs to the peptidase A1 family. Homodimer; disulfide-linked. Post-translationally, glycosylated. The nature of the carbohydrate chain varies between cell types. In brain microglia, the proenzyme contains a high mannose-type oligosaccharide, while the mature enzyme contains a complex-type oligosaccharide. In stomach and spleen, the mature enzyme contains a high mannose-type oligosaccharide. In erythrocyte membranes, the mature enzyme contains a complex-type oligosaccharide. Expressed abundantly in lymphocytes and macrophages of the thymus and spleen, and in the M cells of the intestine. In the brain, expression is limited to reactive microglial cells, the large pyrimidial neurons in the cerebral cortex, the CA1 and CA3 pyrimidial neurons of the hippocampus, the large neurons of the neostriatum, and the Purkinje neurons of the cerebellum.

It is found in the endosome. The enzyme catalyses Similar to cathepsin D, but slightly broader specificity.. Functionally, may have a role in immune function. Probably involved in the processing of antigenic peptides during MHC class II-mediated antigen presentation. May play a role in activation-induced lymphocyte depletion in the thymus, and in neuronal degeneration and glial cell activation in the brain. This chain is Cathepsin E (Ctse), found in Rattus norvegicus (Rat).